A 66-amino-acid polypeptide reads, in one-letter code: ATP synthase protein 8 (66 aa).

A helical transmembrane segment spans residues 8–24 (PWPMVIMSMILTLFYIT). N6-acetyllysine; alternate is present on lysine 54. At lysine 54 the chain carries N6-succinyllysine; alternate. Lysine 57 bears the N6-acetyllysine mark.

It belongs to the ATPase protein 8 family. In terms of assembly, F-type ATPases have 2 components, CF(1) - the catalytic core - and CF(0) - the membrane proton channel. Component of an ATP synthase complex composed of ATP5PB, ATP5MC1, ATP5F1E, ATP5PD, ATP5ME, ATP5PF, ATP5MF, MT-ATP6, MT-ATP8, ATP5F1A, ATP5F1B, ATP5F1D, ATP5F1C, ATP5PO, ATP5MG, ATP5MK and ATP5MJ. Interacts with PRICKLE3.

It is found in the mitochondrion membrane. Functionally, mitochondrial membrane ATP synthase (F(1)F(0) ATP synthase or Complex V) produces ATP from ADP in the presence of a proton gradient across the membrane which is generated by electron transport complexes of the respiratory chain. F-type ATPases consist of two structural domains, F(1) - containing the extramembraneous catalytic core and F(0) - containing the membrane proton channel, linked together by a central stalk and a peripheral stalk. During catalysis, ATP synthesis in the catalytic domain of F(1) is coupled via a rotary mechanism of the central stalk subunits to proton translocation. Part of the complex F(0) domain. Minor subunit located with subunit a in the membrane. The polypeptide is ATP synthase protein 8 (MT-ATP8) (Alouatta sara (Bolivian red howler monkey)).